Consider the following 211-residue polypeptide: Protein-L-isoaspartate O-methyltransferase (211 aa).

S62 is an active-site residue.

This sequence belongs to the methyltransferase superfamily. L-isoaspartyl/D-aspartyl protein methyltransferase family.

Its subcellular location is the cytoplasm. The catalysed reaction is [protein]-L-isoaspartate + S-adenosyl-L-methionine = [protein]-L-isoaspartate alpha-methyl ester + S-adenosyl-L-homocysteine. Functionally, catalyzes the methyl esterification of L-isoaspartyl residues in peptides and proteins that result from spontaneous decomposition of normal L-aspartyl and L-asparaginyl residues. It plays a role in the repair and/or degradation of damaged proteins. In Shewanella piezotolerans (strain WP3 / JCM 13877), this protein is Protein-L-isoaspartate O-methyltransferase.